The following is a 429-amino-acid chain: Enolase (429 aa).

Gln168 contacts (2R)-2-phosphoglycerate. The Proton donor role is filled by Glu210. Residues Asp247, Glu288, and Asp315 each contribute to the Mg(2+) site. Residues Lys340, Arg369, Ser370, and Lys391 each contribute to the (2R)-2-phosphoglycerate site. Lys340 acts as the Proton acceptor in catalysis.

Belongs to the enolase family. Mg(2+) serves as cofactor.

Its subcellular location is the cytoplasm. The protein localises to the secreted. It is found in the cell surface. The enzyme catalyses (2R)-2-phosphoglycerate = phosphoenolpyruvate + H2O. It participates in carbohydrate degradation; glycolysis; pyruvate from D-glyceraldehyde 3-phosphate: step 4/5. Functionally, catalyzes the reversible conversion of 2-phosphoglycerate (2-PG) into phosphoenolpyruvate (PEP). It is essential for the degradation of carbohydrates via glycolysis. In Nostoc punctiforme (strain ATCC 29133 / PCC 73102), this protein is Enolase.